The primary structure comprises 769 residues: Protein transport protein sec39 (769 aa).

The protein belongs to the SEC39 family. Component of a peripheral membrane protein complex consisting of dsl1, sec39 and tip20.

It is found in the endoplasmic reticulum membrane. In terms of biological role, required for protein transport between the Golgi and the endoplasmic reticulum. May contribute to tethering of coatomer-coated retrograde transport vesicles to the ER membrane through interaction with and stabilization of the SNARE complex. The protein is Protein transport protein sec39 of Schizosaccharomyces pombe (strain 972 / ATCC 24843) (Fission yeast).